A 58-amino-acid polypeptide reads, in one-letter code: UPF0391 membrane protein MADE_1011595 (58 aa).

2 helical membrane-spanning segments follow: residues 4 to 24 and 27 to 47; these read WAIT…GGIA and ATGI…ISLI.

This sequence belongs to the UPF0391 family.

It localises to the cell membrane. The protein is UPF0391 membrane protein MADE_1011595 of Alteromonas mediterranea (strain DSM 17117 / CIP 110805 / LMG 28347 / Deep ecotype).